The following is a 406-amino-acid chain: 4-hydroxy-3-methylbut-2-en-1-yl diphosphate synthase (ferredoxin) (406 aa).

Residues Cys-314, Cys-317, Cys-348, and Glu-355 each contribute to the [4Fe-4S] cluster site.

Belongs to the IspG family. It depends on [4Fe-4S] cluster as a cofactor.

The enzyme catalyses (2E)-4-hydroxy-3-methylbut-2-enyl diphosphate + 2 oxidized [2Fe-2S]-[ferredoxin] + H2O = 2-C-methyl-D-erythritol 2,4-cyclic diphosphate + 2 reduced [2Fe-2S]-[ferredoxin] + H(+). It functions in the pathway isoprenoid biosynthesis; isopentenyl diphosphate biosynthesis via DXP pathway; isopentenyl diphosphate from 1-deoxy-D-xylulose 5-phosphate: step 5/6. In terms of biological role, converts 2C-methyl-D-erythritol 2,4-cyclodiphosphate (ME-2,4cPP) into 1-hydroxy-2-methyl-2-(E)-butenyl 4-diphosphate. In Prochlorococcus marinus (strain MIT 9313), this protein is 4-hydroxy-3-methylbut-2-en-1-yl diphosphate synthase (ferredoxin).